Consider the following 297-residue polypeptide: ER membrane protein complex subunit 2-B (297 aa).

TPR repeat units follow at residues 87 to 120 (HRVK…DPTN), 155 to 188 (QEAW…NPHN), and 192 to 225 (YQQF…NNHS).

It belongs to the EMC2 family. In terms of assembly, component of the ER membrane protein complex (EMC).

It localises to the endoplasmic reticulum membrane. Functionally, part of the endoplasmic reticulum membrane protein complex (EMC) that enables the energy-independent insertion into endoplasmic reticulum membranes of newly synthesized membrane proteins. Preferentially accommodates proteins with transmembrane domains that are weakly hydrophobic or contain destabilizing features such as charged and aromatic residues. Involved in the cotranslational insertion of multi-pass membrane proteins in which stop-transfer membrane-anchor sequences become ER membrane spanning helices. It is also required for the post-translational insertion of tail-anchored/TA proteins in endoplasmic reticulum membranes. By mediating the proper cotranslational insertion of N-terminal transmembrane domains in an N-exo topology, with translocated N-terminus in the lumen of the ER, controls the topology of multi-pass membrane proteins. By regulating the insertion of various proteins in membranes, it is indirectly involved in many cellular processes. The chain is ER membrane protein complex subunit 2-B (emc2-b) from Xenopus laevis (African clawed frog).